We begin with the raw amino-acid sequence, 225 residues long: Uridylate kinase (225 aa).

9-10 (GS) provides a ligand contact to ATP. A UMP-binding site is contributed by Gly-44. ATP-binding residues include Gly-45 and Arg-49. UMP is bound by residues Asp-66 and 114-120 (THPGHTT). ATP contacts are provided by Thr-140, Asn-141, Tyr-146, and Asp-149.

The protein belongs to the UMP kinase family. In terms of assembly, homohexamer.

The protein resides in the cytoplasm. It carries out the reaction UMP + ATP = UDP + ADP. Its pathway is pyrimidine metabolism; CTP biosynthesis via de novo pathway; UDP from UMP (UMPK route): step 1/1. With respect to regulation, inhibited by UTP. Functionally, catalyzes the reversible phosphorylation of UMP to UDP. The sequence is that of Uridylate kinase from Thermococcus gammatolerans (strain DSM 15229 / JCM 11827 / EJ3).